We begin with the raw amino-acid sequence, 457 residues long: Transcription factor E2F3 (457 aa).

The segment at 80–171 (LLPSVPGTEP…PKSPSEKTRY (92 aa)) is disordered. The segment covering 93–102 (SLYTTPQGPS) has biased composition (polar residues). The tract at residues 96 to 145 (TTPQGPSSRVGLLQQPPAPGRGGGGGPPAKRRLELGESGHQYLSDGLKTP) is cyclin A/CDK2 binding. The DNA-binding element occupies 147–237 (GKGRAALRSP…KNNVQWMGCS (91 aa)). The span at 155–164 (SPDSPKTPKS) shows a compositional bias: low complexity. Positions 196–217 (LNKAAEVLKVQKRRIYDITNVL) are leucine-zipper. Residues 201 to 237 (EVLKVQKRRIYDITNVLEGIHLIKKKSKNNVQWMGCS) carry the DEF box motif. A dimerization region spans residues 238–329 (LSEDGGMLAQ…VPDSIESLQI (92 aa)). The disordered stretch occupies residues 350 to 387 (HRPMKTNNQDHNGNIPKPTSKDLASNNSGHSDCSVSTA). Residues 371 to 387 (DLASNNSGHSDCSVSTA) show a composition bias toward polar residues. Residues 383 to 457 (SVSTANLSPL…LPLVEDFMCS (75 aa)) are transactivation. Residues 424-441 (EDYLLSLGEEEGISDLFD) form a retinoblastoma protein binding region.

The protein belongs to the E2F/DP family. Component of the DRTF1/E2F transcription factor complex. Binds cooperatively with TFDP1/Dp-1 to E2F sites. Interacts with retinoblastoma protein RB1 and related proteins (such as RBL1) that inhibit the E2F transactivation domain. Binds EAPP.

It is found in the nucleus. Functionally, transcription activator that binds DNA cooperatively with DP proteins through the E2 recognition site, 5'-TTTC[CG]CGC-3' found in the promoter region of a number of genes whose products are involved in cell cycle regulation or in DNA replication. The DRTF1/E2F complex functions in the control of cell-cycle progression from G1 to S phase. E2F3 binds specifically to RB1 in a cell-cycle dependent manner. Inhibits adipogenesis, probably through the repression of CEBPA binding to its target gene promoters. This Mus musculus (Mouse) protein is Transcription factor E2F3 (E2f3).